Reading from the N-terminus, the 490-residue chain is Flap endonuclease 1 (490 aa).

An N-domain region spans residues 1-106; sequence MGIKGLTKFL…DELTKRDERR (106 aa). Asp-34 provides a ligand contact to Mg(2+). Arg-47 and Arg-72 together coordinate DNA. Positions 88, 160, 162, 181, and 183 each coordinate Mg(2+). Positions 124-266 are I-domain; that stretch reads LIKKQSVRTI…STAYKLLKKY (143 aa). DNA is bound at residue Glu-160. Residues Gly-244 and Asp-246 each coordinate DNA. Asp-246 serves as a coordination point for Mg(2+). An interaction with PCNA region spans residues 351–359; that stretch reads SQTCLDGFF. Disordered regions lie at residues 364 to 396 and 421 to 490; these read NERK…SLSC and SSQA…SDED. Over residues 430-442 the composition is skewed to polar residues; that stretch reads ENSSEAPNQSSEI. Basic and acidic residues predominate over residues 443 to 454; that stretch reads KVNKIEENKDSE. Residues 455-469 show a composition bias toward polar residues; that stretch reads SSTVENTPSLQTKSP.

Belongs to the XPG/RAD2 endonuclease family. FEN1 subfamily. In terms of assembly, interacts with PCNA. Three molecules of FEN1 bind to one PCNA trimer with each molecule binding to one PCNA monomer. PCNA stimulates the nuclease activity without altering cleavage specificity. The cofactor is Mg(2+). In terms of processing, phosphorylated. Phosphorylation upon DNA damage induces relocalization to the nuclear plasma.

It localises to the nucleus. Its subcellular location is the nucleolus. The protein localises to the nucleoplasm. The protein resides in the mitochondrion. Its function is as follows. Structure-specific nuclease with 5'-flap endonuclease and 5'-3' exonuclease activities involved in DNA replication and repair. During DNA replication, cleaves the 5'-overhanging flap structure that is generated by displacement synthesis when DNA polymerase encounters the 5'-end of a downstream Okazaki fragment. It enters the flap from the 5'-end and then tracks to cleave the flap base, leaving a nick for ligation. Also involved in the long patch base excision repair (LP-BER) pathway, by cleaving within the apurinic/apyrimidinic (AP) site-terminated flap. Acts as a genome stabilization factor that prevents flaps from equilibrating into structures that lead to duplications and deletions. Also possesses 5'-3' exonuclease activity on nicked or gapped double-stranded DNA, and exhibits RNase H activity. Also involved in replication and repair of rDNA and in repairing mitochondrial DNA. The protein is Flap endonuclease 1 of Cryptosporidium parvum (strain Iowa II).